Reading from the N-terminus, the 351-residue chain is Nuclear inhibitor of protein phosphatase 1 (351 aa).

Positions 1–142 (MAAAANSGSS…LPSAVKGDEK (142 aa)) are interaction with CDC5L, SF3B1 and MELK. An FHA domain is found at 49 to 101 (YLFGRNPDLCDFTIDHQSCSRVHAALVYHKHLKRVFLIDLNSTHGTFLGHIRL). Residues 143 to 224 (MGGEDDELKG…VDPSVGRFRN (82 aa)) form an interaction with EED region. Thr161 is modified (phosphothreonine). A phosphoserine mark is found at Ser178 and Ser199. 2 consecutive short sequence motifs (nuclear localization signal) follow at residues 185–209 (GNLD…DDEI) and 210–240 (INPE…RVEG). Residues 191–200 (RPKRKRKNSR) form an involved in PP-1 inhibition region. Residues 200–203 (RVTF) form an involved in PP-1 binding region. Residue Ser204 is modified to Phosphoserine. Ser249 is modified (phosphoserine). At Tyr264 the chain carries Phosphotyrosine; by LYN; in vitro. Positions 310–329 (AVNMNPAPNPAVYNPEAVNE) are interaction with EED. Residues 316–351 (APNPAVYNPEAVNEPKKKKYAKEAWPGKKPTPSLLI) form a disordered region. The tract at residues 330 to 351 (PKKKKYAKEAWPGKKPTPSLLI) is RNA-binding. The segment at 331 to 337 (KKKKYAK) is involved in PP-1 inhibition. The residue at position 335 (Tyr335) is a Phosphotyrosine.

As to quaternary structure, interacts with phosphorylated CDC5L, SF3B1 and MELK. Interacts with EED, in a nucleic acid-stimulated manner. Part of a complex consisting of PPP1R8, EED, HDAC2 and PP-1. Part of the spliceosome. Interacts with PPP1CA, PPP1CB and PPP1CC. Requires Mg(2+) as cofactor. In terms of processing, may be inactivated by phosphorylation on Ser-199 or Ser-204. Phosphorylated by Lyn in vitro on Tyr-264, and also on Tyr-335 in the presence of RNA. In terms of tissue distribution, ubiquitously expressed, with highest levels in heart and skeletal muscle, followed by brain, placenta, lung, liver and pancreas. Less abundant in kidney. The concentration and ratio between isoforms is cell-type dependent. Isoform Alpha (&gt;90%) and isoform Beta were found in brain, heart and kidney. Isoform Gamma is mainly found in B-cells and T-lymphocytes, and has been found in 293 embryonic kidney cells.

The protein resides in the nucleus. It is found in the nucleus speckle. The protein localises to the cytoplasm. Inhibitor subunit of the major nuclear protein phosphatase-1 (PP-1). It has RNA-binding activity but does not cleave RNA and may target PP-1 to RNA-associated substrates. May also be involved in pre-mRNA splicing. Binds DNA and might act as a transcriptional repressor. Seems to be required for cell proliferation. Its function is as follows. Isoform Gamma is a site-specific single-strand endoribonuclease that cleaves single strand RNA 3' to purines and pyrimidines in A+U-rich regions. It generates 5'-phosphate termini at the site of cleavage. This isoform does not inhibit PP-1. May be implicated in mRNA splicing. The polypeptide is Nuclear inhibitor of protein phosphatase 1 (PPP1R8) (Homo sapiens (Human)).